Consider the following 288-residue polypeptide: Ras-like protein 1 (288 aa).

Residue 11–18 participates in GTP binding; that stretch reads GGGGVGKS. The short motif at 33–41 is the Effector region element; that stretch reads YDPTIEDSY. Residues 58 to 62 and 117 to 120 each bind GTP; these read DTAGQ and NKCD. Positions 176-288 are disordered; it reads EKQQQQQQQQ…KSKNGCCVIV (113 aa). Low complexity-rich tracts occupy residues 178–216 and 246–281; these read QQQQ…NNNN and PNQS…SKSK. Residue C284 is the site of S-palmitoyl cysteine attachment. Cysteine methyl ester is present on C285. C285 is lipidated: S-farnesyl cysteine. A propeptide spans 286 to 288 (removed in mature form); sequence VIV.

Belongs to the small GTPase superfamily. Ras family.

It localises to the cell membrane. The catalysed reaction is GTP + H2O = GDP + phosphate + H(+). Its activity is regulated as follows. Alternates between an inactive form bound to GDP and an active form bound to GTP. Activated by a guanine nucleotide-exchange factor (GEF) and inactivated by a GTPase-activating protein (GAP). Functionally, required for the regulation of both a MAP kinase signaling pathway and a cAMP signaling pathway. The activation of these pathways contributes to the pathogenicity of the cells through the induction of the morphological transition from the yeast to the polarized filamentous form. The sequence is that of Ras-like protein 1 (RAS1) from Candida albicans (strain WO-1) (Yeast).